Here is a 343-residue protein sequence, read N- to C-terminus: ATP-dependent 6-phosphofructokinase (343 aa).

ATP-binding positions include glycine 10, 73 to 74, and 103 to 106; these read RV and GEGT. Glutamate 104 contributes to the Mg(2+) binding site. Residues 126 to 128, arginine 163, 170 to 172, glutamate 223, arginine 267, and 273 to 276 contribute to the substrate site; these read TID, MGR, and HIQR. Catalysis depends on aspartate 128, which acts as the Proton acceptor.

This sequence belongs to the phosphofructokinase type A (PFKA) family. Mixed-substrate PFK group III subfamily. In terms of assembly, homodimer or homotetramer. Requires Mg(2+) as cofactor.

It is found in the cytoplasm. The catalysed reaction is beta-D-fructose 6-phosphate + ATP = beta-D-fructose 1,6-bisphosphate + ADP + H(+). The enzyme catalyses D-tagatofuranose 6-phosphate + ATP = D-tagatofuranose 1,6-bisphosphate + ADP + H(+). Its pathway is carbohydrate degradation; glycolysis; D-glyceraldehyde 3-phosphate and glycerone phosphate from D-glucose: step 3/4. Functionally, catalyzes the phosphorylation of D-fructose 6-phosphate to fructose 1,6-bisphosphate by ATP, the first committing step of glycolysis. Can also catalyze the phosphorylation of tagatose-6-phosphate. This is ATP-dependent 6-phosphofructokinase from Mycobacterium tuberculosis (strain CDC 1551 / Oshkosh).